Here is a 525-residue protein sequence, read N- to C-terminus: NAD(P)H-quinone oxidoreductase chain 4-1 (525 aa).

Transmembrane regions (helical) follow at residues 4-24 (FPWL…IPII), 37-57 (LAVG…GFDL), 89-109 (LIIL…PVTL), 111-131 (PKLF…VFAV), 134-154 (ILLF…ILSI), 167-187 (FILY…TLAF), 210-230 (LLLY…FPLH), 241-261 (TAPA…YALL), 273-293 (AVFA…AAFT), 309-329 (ISHM…GMSG), 330-350 (AMLQ…MVGA), 385-405 (LALP…GFAT), 416-436 (IVVV…LSML), and 462-482 (VFII…PKLI).

This sequence belongs to the complex I subunit 4 family.

Its subcellular location is the cellular thylakoid membrane. The catalysed reaction is a plastoquinone + NADH + (n+1) H(+)(in) = a plastoquinol + NAD(+) + n H(+)(out). It carries out the reaction a plastoquinone + NADPH + (n+1) H(+)(in) = a plastoquinol + NADP(+) + n H(+)(out). In terms of biological role, NDH-1 shuttles electrons from NAD(P)H, via FMN and iron-sulfur (Fe-S) centers, to quinones in the respiratory chain. The immediate electron acceptor for the enzyme in this species is believed to be plastoquinone. Couples the redox reaction to proton translocation (for every two electrons transferred, four hydrogen ions are translocated across the cytoplasmic membrane), and thus conserves the redox energy in a proton gradient. This Synechocystis sp. (strain ATCC 27184 / PCC 6803 / Kazusa) protein is NAD(P)H-quinone oxidoreductase chain 4-1 (ndhD1).